We begin with the raw amino-acid sequence, 68 residues long: Large ribosomal subunit protein bL32 (68 aa).

A disordered region spans residues 1–21; sequence MAVQQNKVSKSRRNNRRAHDS.

It belongs to the bacterial ribosomal protein bL32 family.

The protein is Large ribosomal subunit protein bL32 of Roseobacter denitrificans (strain ATCC 33942 / OCh 114) (Erythrobacter sp. (strain OCh 114)).